The following is a 1404-amino-acid chain: DNA-directed RNA polymerase subunit beta' (1404 aa).

Residues C70, C72, C85, and C88 each coordinate Zn(2+). D460, D462, and D464 together coordinate Mg(2+). Residues C814, C888, C895, and C898 each contribute to the Zn(2+) site.

This sequence belongs to the RNA polymerase beta' chain family. The RNAP catalytic core consists of 2 alpha, 1 beta, 1 beta' and 1 omega subunit. When a sigma factor is associated with the core the holoenzyme is formed, which can initiate transcription. It depends on Mg(2+) as a cofactor. Zn(2+) serves as cofactor.

It catalyses the reaction RNA(n) + a ribonucleoside 5'-triphosphate = RNA(n+1) + diphosphate. In terms of biological role, DNA-dependent RNA polymerase catalyzes the transcription of DNA into RNA using the four ribonucleoside triphosphates as substrates. The protein is DNA-directed RNA polymerase subunit beta' of Shewanella pealeana (strain ATCC 700345 / ANG-SQ1).